Reading from the N-terminus, the 262-residue chain is Ribosomal RNA small subunit methyltransferase A (262 aa).

S-adenosyl-L-methionine contacts are provided by N20, L22, G47, E68, D90, and N110.

It belongs to the class I-like SAM-binding methyltransferase superfamily. rRNA adenine N(6)-methyltransferase family. RsmA subfamily.

It localises to the cytoplasm. It carries out the reaction adenosine(1518)/adenosine(1519) in 16S rRNA + 4 S-adenosyl-L-methionine = N(6)-dimethyladenosine(1518)/N(6)-dimethyladenosine(1519) in 16S rRNA + 4 S-adenosyl-L-homocysteine + 4 H(+). In terms of biological role, specifically dimethylates two adjacent adenosines (A1518 and A1519) in the loop of a conserved hairpin near the 3'-end of 16S rRNA in the 30S particle. May play a critical role in biogenesis of 30S subunits. This Chlorobium phaeobacteroides (strain BS1) protein is Ribosomal RNA small subunit methyltransferase A.